A 90-amino-acid chain; its full sequence is MPSTVINLYYLKINSISGNGSITIGEAAYNSPTNNQKSQGTNSSFGDTSPTESVMENFLNDPDVNDQTSIGNSDTSNVNAPPIAPPPILD.

The tract at residues 25 to 90 (GEAAYNSPTN…PPIAPPPILD (66 aa)) is disordered. Composition is skewed to polar residues over residues 30-54 (NSPT…TESV) and 65-79 (NDQT…SNVN).

This is an uncharacterized protein from Bacillus subtilis (strain 168).